A 120-amino-acid polypeptide reads, in one-letter code: MIRNTFKLVSNIAVRPAFSSTFVRQPIVASSMMVRNYGSISEKEITDRVIGVVSQYDKVSGKTVTPTTTFKELGLDSLDSADILVAVEEEFGIEIPDEEADKITSCAETISYLRKTPTAK.

A Carrier domain is found at 43–117 (KEITDRVIGV…ETISYLRKTP (75 aa)). Ser77 carries the post-translational modification O-(pantetheine 4'-phosphoryl)serine.

The protein belongs to the acyl carrier protein (ACP) family. In terms of assembly, complex I is composed of about 45 different subunits. Post-translationally, 4'-phosphopantetheine is transferred from CoA to a specific serine of apo-ACP by acpS. This modification is essential for activity because fatty acids are bound in thioester linkage to the sulfhydryl of the prosthetic group.

The protein localises to the mitochondrion. Its pathway is lipid metabolism; fatty acid biosynthesis. In terms of biological role, carrier of the growing fatty acid chain in fatty acid biosynthesis. May be involved in the synthesis of very-long-chain fatty acids. Accessory and non-catalytic subunit of the mitochondrial membrane respiratory chain NADH dehydrogenase (Complex I), which functions in the transfer of electrons from NADH to the respiratory chain. This chain is Acyl carrier protein, mitochondrial (ndufab1), found in Dictyostelium discoideum (Social amoeba).